A 175-amino-acid chain; its full sequence is Sialidase 85-1.3 (175 aa).

It belongs to the glycosyl hydrolase 33 family.

The catalysed reaction is Hydrolysis of alpha-(2-&gt;3)-, alpha-(2-&gt;6)-, alpha-(2-&gt;8)- glycosidic linkages of terminal sialic acid residues in oligosaccharides, glycoproteins, glycolipids, colominic acid and synthetic substrates.. Its function is as follows. Developmentally regulated neuraminidase implicated in parasite invasion of cells. May contribute to the pathology during T.cruzi infection by cleaving sialic acid from cells of the immune system. This Trypanosoma cruzi protein is Sialidase 85-1.3 (SA85-1.3).